Here is a 204-residue protein sequence, read N- to C-terminus: Probable nicotinate-nucleotide adenylyltransferase (204 aa).

This sequence belongs to the NadD family.

The enzyme catalyses nicotinate beta-D-ribonucleotide + ATP + H(+) = deamido-NAD(+) + diphosphate. It functions in the pathway cofactor biosynthesis; NAD(+) biosynthesis; deamido-NAD(+) from nicotinate D-ribonucleotide: step 1/1. Its function is as follows. Catalyzes the reversible adenylation of nicotinate mononucleotide (NaMN) to nicotinic acid adenine dinucleotide (NaAD). This is Probable nicotinate-nucleotide adenylyltransferase from Dehalococcoides mccartyi (strain ATCC BAA-2266 / KCTC 15142 / 195) (Dehalococcoides ethenogenes (strain 195)).